The primary structure comprises 700 residues: DNA ligase 2 (700 aa).

Residues 42–46 (DDAYD) and 89–90 (SL) contribute to the NAD(+) site. Lysine 122 serves as the catalytic N6-AMP-lysine intermediate. Arginine 143, glutamate 177, lysine 303, and lysine 327 together coordinate NAD(+). Positions 421, 424, 437, and 443 each coordinate Zn(2+). The disordered stretch occupies residues 590–621 (MTEPGATPPRPADTDGADGATAEAPGDGGPLA). Residues 615–700 (GDGGPLAGMK…FAVLVAGLLS (86 aa)) enclose the BRCT domain.

This sequence belongs to the NAD-dependent DNA ligase family. LigA subfamily. Mg(2+) is required as a cofactor. The cofactor is Mn(2+).

The catalysed reaction is NAD(+) + (deoxyribonucleotide)n-3'-hydroxyl + 5'-phospho-(deoxyribonucleotide)m = (deoxyribonucleotide)n+m + AMP + beta-nicotinamide D-nucleotide.. In terms of biological role, DNA ligase that catalyzes the formation of phosphodiester linkages between 5'-phosphoryl and 3'-hydroxyl groups in double-stranded DNA using NAD as a coenzyme and as the energy source for the reaction. It is essential for DNA replication and repair of damaged DNA. The polypeptide is DNA ligase 2 (Streptomyces coelicolor (strain ATCC BAA-471 / A3(2) / M145)).